Reading from the N-terminus, the 688-residue chain is Elongation factor G (688 aa).

In terms of domain architecture, tr-type G spans 8–282 (DKFRNFGIMA…GVVDYLPSPL (275 aa)). GTP contacts are provided by residues 17–24 (AHIDAGKT), 81–85 (DTPGH), and 135–138 (NKMD).

Belongs to the TRAFAC class translation factor GTPase superfamily. Classic translation factor GTPase family. EF-G/EF-2 subfamily.

Its subcellular location is the cytoplasm. Functionally, catalyzes the GTP-dependent ribosomal translocation step during translation elongation. During this step, the ribosome changes from the pre-translocational (PRE) to the post-translocational (POST) state as the newly formed A-site-bound peptidyl-tRNA and P-site-bound deacylated tRNA move to the P and E sites, respectively. Catalyzes the coordinated movement of the two tRNA molecules, the mRNA and conformational changes in the ribosome. The chain is Elongation factor G from Clostridium beijerinckii (strain ATCC 51743 / NCIMB 8052) (Clostridium acetobutylicum).